The primary structure comprises 646 residues: Tyrosine-protein kinase MasK (646 aa).

The Periplasmic portion of the chain corresponds to 1–415 (MSPPQTTLPV…PTAGGRRWRT (415 aa)). In terms of domain architecture, Protein kinase spans 25-300 (YVLVRKLAEG…AFADALETFL (276 aa)). ATP-binding positions include 31 to 39 (LAEGGMAEI) and K57. D163 functions as the Proton acceptor in the catalytic mechanism. Positions 373–410 (TSAQRPGMSMRPSSPGVPAHGAASRGSTSPESAPTAGG) are disordered. The helical transmembrane segment at 416-433 (LAVGLAGGLMLAAAGIVG) threads the bilayer. Residues 434-646 (YRQWMTTPAS…VMPFSWRVTQ (213 aa)) are Cytoplasmic-facing. Residues 521–547 (AGAASDVEAEADEEGADAAPVRSKKAS) are disordered. The span at 527–536 (VEAEADEEGA) shows a compositional bias: acidic residues.

Belongs to the protein kinase superfamily. Tyr protein kinase family. In terms of assembly, interacts with MglA. Post-translationally, autophosphorylated.

It is found in the cell inner membrane. It carries out the reaction L-tyrosyl-[protein] + ATP = O-phospho-L-tyrosyl-[protein] + ADP + H(+). Its function is as follows. Essential for growth. Interacts with MglA to control social gliding motility. This is Tyrosine-protein kinase MasK (masK) from Myxococcus xanthus (strain DK1622).